The following is a 362-amino-acid chain: Leucoanthocyanidin dioxygenase (362 aa).

Residues 211 to 313 enclose the Fe2OG dioxygenase domain; the sequence is MEELLLQKKI…RISWAVFCEP (103 aa). The Fe cation site is built by His238, Asp240, and His294.

It belongs to the iron/ascorbate-dependent oxidoreductase family. The cofactor is Fe cation. L-ascorbate serves as cofactor.

It carries out the reaction a (2R,3S,4S)-leucoanthocyanidin + 2-oxoglutarate + O2 = a 4-H-anthocyanidin with a 3-hydroxy group + succinate + CO2 + 2 H2O. Its pathway is pigment biosynthesis; anthocyanin biosynthesis. Oxidation of leucoanthocyanidins into anthocyanidins. This is Leucoanthocyanidin dioxygenase from Vitis vinifera (Grape).